We begin with the raw amino-acid sequence, 282 residues long: Serine/threonine-protein kinase Aurora-2 (282 aa).

The region spanning 19–270 (FDIGKPLGRG…LHKLLEHPWI (252 aa)) is the Protein kinase domain. Residues 25-33 (LGRGKFGHV) and K48 contribute to the ATP site. Residue D142 is the Proton acceptor of the active site. S164 carries the post-translational modification Phosphoserine. At T173 the chain carries Phosphothreonine.

This sequence belongs to the protein kinase superfamily. Ser/Thr protein kinase family. Aurora subfamily. In terms of processing, phosphorylation at Thr-173 may regulate activity and degradation of AUR2 in a cell cycle dependent manner. In terms of tissue distribution, abundant in roots, flowers and flower buds, low or absent in expanded leaves, stems and siliques.

The protein resides in the nucleus membrane. The protein localises to the cytoplasm. Its subcellular location is the cytoskeleton. It localises to the spindle. It is found in the spindle pole. It carries out the reaction L-seryl-[protein] + ATP = O-phospho-L-seryl-[protein] + ADP + H(+). The catalysed reaction is L-threonyl-[protein] + ATP = O-phospho-L-threonyl-[protein] + ADP + H(+). Phosphorylates specifically 'Ser-10' of histone H3 in vitro. Associates with cytoskeletal structures that are necessary for cytokinesis and with the microtubule spindle. Might colocalize with gamma-tubulin and function in microtubule organizing centers (MTOCs). The polypeptide is Serine/threonine-protein kinase Aurora-2 (AUR2) (Arabidopsis thaliana (Mouse-ear cress)).